The primary structure comprises 132 residues: Small ribosomal subunit protein uS8 (132 aa).

Belongs to the universal ribosomal protein uS8 family. As to quaternary structure, part of the 30S ribosomal subunit. Contacts proteins S5 and S12.

One of the primary rRNA binding proteins, it binds directly to 16S rRNA central domain where it helps coordinate assembly of the platform of the 30S subunit. This is Small ribosomal subunit protein uS8 from Beijerinckia indica subsp. indica (strain ATCC 9039 / DSM 1715 / NCIMB 8712).